We begin with the raw amino-acid sequence, 130 residues long: Cytochrome b-c1 complex subunit 7 (130 aa).

It belongs to the UQCRB/QCR7 family. In terms of assembly, component of the ubiquinol-cytochrome c oxidoreductase (cytochrome b-c1 complex, complex III, CIII), a multisubunit enzyme composed of 3 respiratory subunits cytochrome b, cytochrome c1 and Rieske protein, 2 core protein subunits, and additional low-molecular weight protein subunits. The complex exists as an obligatory dimer and forms supercomplexes (SCs) in the inner mitochondrial membrane with cytochrome c oxidase (complex IV, CIV).

Its subcellular location is the mitochondrion inner membrane. In terms of biological role, component of the ubiquinol-cytochrome c oxidoreductase, a multisubunit transmembrane complex that is part of the mitochondrial electron transport chain which drives oxidative phosphorylation. The respiratory chain contains 3 multisubunit complexes succinate dehydrogenase (complex II, CII), ubiquinol-cytochrome c oxidoreductase (cytochrome b-c1 complex, complex III, CIII) and cytochrome c oxidase (complex IV, CIV), that cooperate to transfer electrons derived from NADH and succinate to molecular oxygen, creating an electrochemical gradient over the inner membrane that drives transmembrane transport and the ATP synthase. The cytochrome b-c1 complex catalyzes electron transfer from ubiquinol to cytochrome c, linking this redox reaction to translocation of protons across the mitochondrial inner membrane, with protons being carried across the membrane as hydrogens on the quinol. In the process called Q cycle, 2 protons are consumed from the matrix, 4 protons are released into the intermembrane space and 2 electrons are passed to cytochrome c. The polypeptide is Cytochrome b-c1 complex subunit 7 (Schistosoma mansoni (Blood fluke)).